The following is a 150-amino-acid chain: Troponin C, isoform 2B (150 aa).

Methionine 1 is modified (N-acetylmethionine). EF-hand domains follow at residues 7–42 (EQLSALQKAFDSFDTDSKGFITPETVGVILRMMGVK), 43–78 (ISEKNLQEVISETDEDGSGELEFEEFVELAAKFLIE), 83–118 (ALKAELREAFRVYDRGGNGYITTDVLKEILRELDNR), and 119–150 (LTEEDLDSIIEEVDEDGSGTLDFNEFMQMMNG). Ca(2+) is bound by residues aspartate 56, aspartate 58, serine 60, glutamate 62, and glutamate 67. Aspartate 132, aspartate 134, serine 136, threonine 138, and glutamate 143 together coordinate Ca(2+).

This sequence belongs to the troponin C family.

Functionally, troponin is the central regulatory protein of striated muscle contraction. Tn consists of three components: Tn-I which is the inhibitor of actomyosin ATPase, Tn-T which contains the binding site for tropomyosin and Tn-C. The binding of calcium to Tn-C abolishes the inhibitory action of Tn on actin filaments. This Homarus americanus (American lobster) protein is Troponin C, isoform 2B.